The chain runs to 561 residues: Putative transport protein ASA_2308 (561 aa).

Transmembrane regions (helical) follow at residues 8–28 (LLHQSDSLLLFVVLAFGLLLG), 37–57 (IGNTIGVLFTALLFGQMGFEF), 66–86 (FMLFIFCVGIEAGPHFFSVFL), 90–110 (IHYITLTLVILLTALLLTVGL), and 161–181 (NMGIGYALTYLVGLVGLMLVV). RCK C-terminal domains follow at residues 206 to 291 (SDNE…NYRN) and 293 to 376 (KEVF…KIGF). 5 helical membrane passes run 386-406 (LVAFTTFFVLGLLIGSVSLVF), 409-429 (LEFGLGNAVGLLLAGILMGYL), 450-470 (LGLAVFMVSTGLKAGGGILDH), 476-496 (AVVLFSGMLVTTLPVLVGYLF), and 541-561 (TYAVANVMLTLAGSFIIGFWF).

Belongs to the AAE transporter (TC 2.A.81) family. YbjL subfamily.

The protein resides in the cell membrane. This is Putative transport protein ASA_2308 from Aeromonas salmonicida (strain A449).